A 157-amino-acid polypeptide reads, in one-letter code: Ubiquitin-like protein 4A (157 aa).

One can recognise a Ubiquitin-like domain in the interval 1 to 76; that stretch reads MQLTVKALQG…LNLVVKPLEK (76 aa). Residue lysine 48 forms a Glycyl lysine isopeptide (Lys-Gly) (interchain with G-Cter in ubiquitin) linkage. Serine 90 carries the phosphoserine modification. The interval 96–138 is required and sufficient for interaction with BAG6; that stretch reads WQLISKVLARHFSIGDASRVLEQLQRDYDRSLSRLTLDDIERL.

In terms of assembly, component of the BAG6/BAT3 complex, at least composed of BAG6, UBL4A and GET4/TRC35. Interacts with BAG6; the interaction is direct and required for UBL4A protein stability. Interacts with USP13; may be indirect via BAG6. In terms of processing, polyubiquitinated. Ubiquitination by AMFR and deubiquitination by USP13 may regulate the interaction between the BAG6/BAT complex and SGTA and therefore may regulate client proteins fate.

Its subcellular location is the cytoplasm. It localises to the cytosol. The protein localises to the nucleus. Functionally, as part of a cytosolic protein quality control complex, the BAG6/BAT3 complex, maintains misfolded and hydrophobic patches-containing proteins in a soluble state and participates in their proper delivery to the endoplasmic reticulum or alternatively can promote their sorting to the proteasome where they undergo degradation. The BAG6/BAT3 complex is involved in the post-translational delivery of tail-anchored/type II transmembrane proteins to the endoplasmic reticulum membrane. Recruited to ribosomes, it interacts with the transmembrane region of newly synthesized tail-anchored proteins and together with SGTA and ASNA1 mediates their delivery to the endoplasmic reticulum. Client proteins that cannot be properly delivered to the endoplasmic reticulum are ubiquitinated and sorted to the proteasome. Similarly, the BAG6/BAT3 complex also functions as a sorting platform for proteins of the secretory pathway that are mislocalized to the cytosol either delivering them to the proteasome for degradation or to the endoplasmic reticulum. The BAG6/BAT3 complex also plays a role in the endoplasmic reticulum-associated degradation (ERAD), a quality control mechanism that eliminates unwanted proteins of the endoplasmic reticulum through their retrotranslocation to the cytosol and their targeting to the proteasome. It maintains these retrotranslocated proteins in an unfolded yet soluble state condition in the cytosol to ensure their proper delivery to the proteasome. This Rattus norvegicus (Rat) protein is Ubiquitin-like protein 4A (Ubl4a).